The following is a 342-amino-acid chain: Putative anthocyanidin reductase (342 aa).

NADP(+) contacts are provided by residues Arg44, Lys51, 71-72 (EL), 91-93 (VAT), Tyr172, Lys176, 199-202 (PVLV), and Ser214. Residue Lys176 is the Proton donor of the active site.

The protein belongs to the NAD(P)-dependent epimerase/dehydratase family. Dihydroflavonol-4-reductase subfamily. As to expression, highly expressed in leaves and weakly in stems. Not expressed in roots.

It functions in the pathway secondary metabolite biosynthesis; flavonoid biosynthesis. The sequence is that of Putative anthocyanidin reductase from Ginkgo biloba (Ginkgo).